Consider the following 505-residue polypeptide: Mannosylglucosyl-3-phosphoglycerate synthase (505 aa).

Monomer in solution.

The catalysed reaction is (2R)-2-O-(alpha-D-glucopyranosyl)-3-phospho-glycerate + GDP-alpha-D-mannose = (2R)-2-O-[alpha-D-mannopyranosyl-(1-&gt;2)-alpha-D-glucopyranosyl]-3-phospho-glycerate + GDP + H(+). Its activity is regulated as follows. Not strictly dependent on divalent cations, but the presence of Mn(2+), Ca(2+), Mg(2+) or Co(2+) stimulates activity. Involved in the biosynthesis of the compatible solute mannosylglucosylglycerate through a phosphorylating pathway. Catalyzes the conversion of glucosyl-3-phosphoglycerate (GPG) to mannosylglucosyl-3-phosphoglycerate (MGPG). The polypeptide is Mannosylglucosyl-3-phosphoglycerate synthase (Petrotoga mobilis (strain DSM 10674 / SJ95)).